A 511-amino-acid chain; its full sequence is 2-isopropylmalate synthase (511 aa).

The Pyruvate carboxyltransferase domain occupies 6–269; the sequence is IIIFDTTLRD…YTDIKCENIF (264 aa). Positions 15, 203, 205, and 239 each coordinate Mn(2+). The segment at 394-511 is regulatory domain; it reads VLEKLSVISG…SLKVEERKMA (118 aa).

This sequence belongs to the alpha-IPM synthase/homocitrate synthase family. LeuA type 1 subfamily. Homodimer. The cofactor is Mn(2+).

It is found in the cytoplasm. The catalysed reaction is 3-methyl-2-oxobutanoate + acetyl-CoA + H2O = (2S)-2-isopropylmalate + CoA + H(+). It participates in amino-acid biosynthesis; L-leucine biosynthesis; L-leucine from 3-methyl-2-oxobutanoate: step 1/4. In terms of biological role, catalyzes the condensation of the acetyl group of acetyl-CoA with 3-methyl-2-oxobutanoate (2-ketoisovalerate) to form 3-carboxy-3-hydroxy-4-methylpentanoate (2-isopropylmalate). This chain is 2-isopropylmalate synthase, found in Campylobacter jejuni subsp. jejuni serotype O:2 (strain ATCC 700819 / NCTC 11168).